We begin with the raw amino-acid sequence, 501 residues long: Cytochrome P450 6j1 (501 aa).

Heme is bound at residue Cys444.

Belongs to the cytochrome P450 family. Heme serves as cofactor.

The protein localises to the endoplasmic reticulum membrane. It localises to the microsome membrane. The polypeptide is Cytochrome P450 6j1 (CYP6J1) (Blattella germanica (German cockroach)).